Consider the following 331-residue polypeptide: tRNA pseudouridine synthase B (331 aa).

The active-site Nucleophile is aspartate 51.

Belongs to the pseudouridine synthase TruB family. Type 1 subfamily.

It carries out the reaction uridine(55) in tRNA = pseudouridine(55) in tRNA. Functionally, responsible for synthesis of pseudouridine from uracil-55 in the psi GC loop of transfer RNAs. The chain is tRNA pseudouridine synthase B from Verminephrobacter eiseniae (strain EF01-2).